A 286-amino-acid chain; its full sequence is ATP synthase gamma chain (286 aa).

Belongs to the ATPase gamma chain family. In terms of assembly, F-type ATPases have 2 components, CF(1) - the catalytic core - and CF(0) - the membrane proton channel. CF(1) has five subunits: alpha(3), beta(3), gamma(1), delta(1), epsilon(1). CF(0) has three main subunits: a, b and c.

The protein resides in the cell inner membrane. Produces ATP from ADP in the presence of a proton gradient across the membrane. The gamma chain is believed to be important in regulating ATPase activity and the flow of protons through the CF(0) complex. This Shewanella halifaxensis (strain HAW-EB4) protein is ATP synthase gamma chain.